Consider the following 307-residue polypeptide: Ornithine carbamoyltransferase (307 aa).

Carbamoyl phosphate is bound by residues serine 50–threonine 53, glutamine 77, arginine 101, and histidine 128–glutamine 131. L-ornithine-binding positions include asparagine 160, aspartate 224, and serine 228 to methionine 229. Carbamoyl phosphate contacts are provided by residues cysteine 264–leucine 265 and arginine 292.

Belongs to the aspartate/ornithine carbamoyltransferase superfamily. OTCase family.

Its subcellular location is the cytoplasm. The enzyme catalyses carbamoyl phosphate + L-ornithine = L-citrulline + phosphate + H(+). It participates in amino-acid biosynthesis; L-arginine biosynthesis; L-arginine from L-ornithine and carbamoyl phosphate: step 1/3. Its function is as follows. Reversibly catalyzes the transfer of the carbamoyl group from carbamoyl phosphate (CP) to the N(epsilon) atom of ornithine (ORN) to produce L-citrulline. The chain is Ornithine carbamoyltransferase from Mycolicibacterium gilvum (strain PYR-GCK) (Mycobacterium gilvum (strain PYR-GCK)).